Consider the following 116-residue polypeptide: Movement protein TGB2 (116 aa).

Over 1–11 (MPLTPPPNPQK) the chain is Cytoplasmic. A helical transmembrane segment spans residues 12 to 32 (TYQIAILALGLVLLAFVLISD). Topologically, residues 33–77 (HSPKVGDHLHNLPFGGEYKDGTKSIKYFQRPNQHSLSKTLAKSHN) are lumenal. A helical transmembrane segment spans residues 78-98 (TTIFLLILGLIVTLHGLHYFN). Over 99–116 (NNRRVSSSLHCVLCQNKH) the chain is Cytoplasmic.

This sequence belongs to the Tymovirales TGBp2 protein family.

It is found in the host endoplasmic reticulum membrane. Its function is as follows. Plays a role in viral cell-to-cell propagation, by facilitating genome transport to neighboring plant cells through plasmosdesmata,. In White clover mosaic virus (strain M) (WCMV), this protein is Movement protein TGB2.